Reading from the N-terminus, the 105-residue chain is Large ribosomal subunit protein uL24 (105 aa).

Belongs to the universal ribosomal protein uL24 family. In terms of assembly, part of the 50S ribosomal subunit.

Its function is as follows. One of two assembly initiator proteins, it binds directly to the 5'-end of the 23S rRNA, where it nucleates assembly of the 50S subunit. Functionally, one of the proteins that surrounds the polypeptide exit tunnel on the outside of the subunit. This Methylococcus capsulatus (strain ATCC 33009 / NCIMB 11132 / Bath) protein is Large ribosomal subunit protein uL24.